Consider the following 306-residue polypeptide: Putative B3 domain-containing protein Os03g0621600 (306 aa).

A DNA-binding region (TF-B3 1) is located at residues F29–S122. Residues Y139–P166 are disordered. Positions G210–K306 form a DNA-binding region, TF-B3 2.

Its subcellular location is the nucleus. This chain is Putative B3 domain-containing protein Os03g0621600, found in Oryza sativa subsp. japonica (Rice).